The following is a 368-amino-acid chain: Queuine tRNA-ribosyltransferase (368 aa).

Residue Asp89 is the Proton acceptor of the active site. Substrate contacts are provided by residues 89–93, Asp143, and Gly216; that span reads DSGGF. The interval 247–253 is RNA binding; that stretch reads GVGKPED. The Nucleophile role is filled by Asp266. Residues 271–275 are RNA binding; important for wobble base 34 recognition; that stretch reads TRNAR. Residues Cys304, Cys306, Cys309, and His335 each contribute to the Zn(2+) site.

This sequence belongs to the queuine tRNA-ribosyltransferase family. In terms of assembly, homodimer. Within each dimer, one monomer is responsible for RNA recognition and catalysis, while the other monomer binds to the replacement base PreQ1. Requires Zn(2+) as cofactor.

It carries out the reaction 7-aminomethyl-7-carbaguanine + guanosine(34) in tRNA = 7-aminomethyl-7-carbaguanosine(34) in tRNA + guanine. It participates in tRNA modification; tRNA-queuosine biosynthesis. Its function is as follows. Catalyzes the base-exchange of a guanine (G) residue with the queuine precursor 7-aminomethyl-7-deazaguanine (PreQ1) at position 34 (anticodon wobble position) in tRNAs with GU(N) anticodons (tRNA-Asp, -Asn, -His and -Tyr). Catalysis occurs through a double-displacement mechanism. The nucleophile active site attacks the C1' of nucleotide 34 to detach the guanine base from the RNA, forming a covalent enzyme-RNA intermediate. The proton acceptor active site deprotonates the incoming PreQ1, allowing a nucleophilic attack on the C1' of the ribose to form the product. After dissociation, two additional enzymatic reactions on the tRNA convert PreQ1 to queuine (Q), resulting in the hypermodified nucleoside queuosine (7-(((4,5-cis-dihydroxy-2-cyclopenten-1-yl)amino)methyl)-7-deazaguanosine). The polypeptide is Queuine tRNA-ribosyltransferase (Buchnera aphidicola subsp. Schizaphis graminum (strain Sg)).